Consider the following 340-residue polypeptide: MAKWLRDYLSFGGRRPPPQPPTPDYTESDILRAYRAQKNLDFEDPYEDAESRLEPDPAGPGDSKNPGDAKYGSPKHRLIKVEAADMARAKALLGGPGEELEADTEYLDPFDAQPHPAPPDDGYMEPYDAQWVMSELPGRGVQLYDTPYEEQDPETADGPPSGQKPRQSRMPQEDERPADEYDQPWEWKKDHISRAFAVQFDSPEWERTPGSAKELRRPPPRSPQPAERVDPALPLEKQPWFHGPLNRADAESLLSLCKEGSYLVRLSETNPQDCSLSLRSSQGFLHLKFARTRENQVVLGQHSGPFPSVPELVLHYSSRPLPVQGAEHLALLYPVVTQTP.

3 disordered regions span residues 1 to 77 (MAKW…PKHR), 94 to 186 (GGPG…QPWE), and 198 to 230 (VQFD…ERVD). Over residues 98-108 (EELEADTEYLD) the composition is skewed to acidic residues. A compositionally biased stretch (basic and acidic residues) spans 171–186 (PQEDERPADEYDQPWE). Positions 240 to 335 (WFHGPLNRAD…AEHLALLYPV (96 aa)) constitute an SH2 domain.

Post-translationally, tyrosine phosphorylated by ABL.

Its function is as follows. May function as an adapter protein. The polypeptide is SH2 domain-containing adapter protein D (SHD) (Homo sapiens (Human)).